Here is a 351-residue protein sequence, read N- to C-terminus: Phosphoribosylformylglycinamidine cyclo-ligase (351 aa).

It belongs to the AIR synthase family.

It is found in the cytoplasm. It carries out the reaction 2-formamido-N(1)-(5-O-phospho-beta-D-ribosyl)acetamidine + ATP = 5-amino-1-(5-phospho-beta-D-ribosyl)imidazole + ADP + phosphate + H(+). The protein operates within purine metabolism; IMP biosynthesis via de novo pathway; 5-amino-1-(5-phospho-D-ribosyl)imidazole from N(2)-formyl-N(1)-(5-phospho-D-ribosyl)glycinamide: step 2/2. This is Phosphoribosylformylglycinamidine cyclo-ligase from Xylella fastidiosa (strain 9a5c).